Here is a 72-residue protein sequence, read N- to C-terminus: Translation initiation factor IF-1 (72 aa).

The S1-like domain occupies 1–72; it reads MAKEDVIEMQ…SKGRIVFRAR (72 aa).

This sequence belongs to the IF-1 family. In terms of assembly, component of the 30S ribosomal translation pre-initiation complex which assembles on the 30S ribosome in the order IF-2 and IF-3, IF-1 and N-formylmethionyl-tRNA(fMet); mRNA recruitment can occur at any time during PIC assembly.

The protein localises to the cytoplasm. One of the essential components for the initiation of protein synthesis. Stabilizes the binding of IF-2 and IF-3 on the 30S subunit to which N-formylmethionyl-tRNA(fMet) subsequently binds. Helps modulate mRNA selection, yielding the 30S pre-initiation complex (PIC). Upon addition of the 50S ribosomal subunit IF-1, IF-2 and IF-3 are released leaving the mature 70S translation initiation complex. The polypeptide is Translation initiation factor IF-1 (Vibrio cholerae serotype O1 (strain ATCC 39541 / Classical Ogawa 395 / O395)).